A 376-amino-acid chain; its full sequence is Arginine/serine-rich coiled-coil protein 2 (376 aa).

The interval 1-171 (MIRTNFLLKQ…PSPPPFRGRN (171 aa)) is disordered. Residues 13-52 (RHESKDKSSKRHKSEEHNDKEHSSDKGRERLNSSENGEDR) show a composition bias toward basic and acidic residues. At Ser45 the chain carries Phosphoserine. The segment covering 53-155 (HKRKERKSSR…KRIEKPRRFS (103 aa)) has biased composition (basic residues). Residues 171–214 (NTAMDAQEALARRLERAKKLQEQREKEMVEKQKQQEMAAAAAAT) are a coiled coil. A Glycyl lysine isopeptide (Lys-Gly) (interchain with G-Cter in SUMO1); alternate cross-link involves residue Lys317. Residue Lys317 forms a Glycyl lysine isopeptide (Lys-Gly) (interchain with G-Cter in SUMO2); alternate linkage. Residue Ser318 is modified to Phosphoserine.

The protein belongs to the RSRC2 family.

This chain is Arginine/serine-rich coiled-coil protein 2 (Rsrc2), found in Rattus norvegicus (Rat).